Reading from the N-terminus, the 142-residue chain is Hemoglobin subunit alpha-A (142 aa).

The Globin domain maps to 2–142 (VLSGSDKTNV…VGNVLTAKYR (141 aa)). An O2-binding site is contributed by His-59. A heme b-binding site is contributed by His-88.

It belongs to the globin family. In terms of assembly, heterotetramer of two alpha chains and two beta chains. As to expression, red blood cells.

Functionally, involved in oxygen transport from the lung to the various peripheral tissues. This Ara ararauna (Blue-and-yellow macaw) protein is Hemoglobin subunit alpha-A (HBAA).